A 394-amino-acid chain; its full sequence is Elongation factor Tu (394 aa).

One can recognise a tr-type G domain in the interval 10–204 (KPHVNIGTIG…AVDSYIPQPI (195 aa)). The G1 stretch occupies residues 19 to 26 (GHVDHGKT). A GTP-binding site is contributed by 19–26 (GHVDHGKT). Thr26 serves as a coordination point for Mg(2+). The G2 stretch occupies residues 60-64 (GITIS). Residues 81–84 (DCPG) form a G3 region. Residues 81–85 (DCPGH) and 136–139 (NKVD) contribute to the GTP site. The G4 stretch occupies residues 136 to 139 (NKVD). The segment at 174 to 176 (SAL) is G5.

It belongs to the TRAFAC class translation factor GTPase superfamily. Classic translation factor GTPase family. EF-Tu/EF-1A subfamily. As to quaternary structure, monomer.

The protein resides in the cytoplasm. The enzyme catalyses GTP + H2O = GDP + phosphate + H(+). In terms of biological role, GTP hydrolase that promotes the GTP-dependent binding of aminoacyl-tRNA to the A-site of ribosomes during protein biosynthesis. The polypeptide is Elongation factor Tu (Rickettsia typhi (strain ATCC VR-144 / Wilmington)).